We begin with the raw amino-acid sequence, 179 residues long: Large ribosomal subunit protein uL5 (179 aa).

It belongs to the universal ribosomal protein uL5 family. As to quaternary structure, part of the 50S ribosomal subunit; part of the 5S rRNA/L5/L18/L25 subcomplex. Contacts the 5S rRNA and the P site tRNA. Forms a bridge to the 30S subunit in the 70S ribosome.

Functionally, this is one of the proteins that bind and probably mediate the attachment of the 5S RNA into the large ribosomal subunit, where it forms part of the central protuberance. In the 70S ribosome it contacts protein S13 of the 30S subunit (bridge B1b), connecting the 2 subunits; this bridge is implicated in subunit movement. Contacts the P site tRNA; the 5S rRNA and some of its associated proteins might help stabilize positioning of ribosome-bound tRNAs. This Shewanella pealeana (strain ATCC 700345 / ANG-SQ1) protein is Large ribosomal subunit protein uL5.